Here is a 353-residue protein sequence, read N- to C-terminus: UPF0324 membrane protein PP_3661 (353 aa).

8 consecutive transmembrane segments (helical) span residues 20–42 (LNGI…MPAI), 70–92 (ASWA…AFFG), 105–127 (WSGL…WCGM), 137–159 (ALLT…ESAL), 166–188 (SAMA…PLAI), 234–253 (MTRV…WISR), 266–288 (IAMP…QVLP), and 326–348 (ALAT…TLGV).

The protein belongs to the UPF0324 family.

The protein localises to the cell membrane. The sequence is that of UPF0324 membrane protein PP_3661 from Pseudomonas putida (strain ATCC 47054 / DSM 6125 / CFBP 8728 / NCIMB 11950 / KT2440).